We begin with the raw amino-acid sequence, 215 residues long: Adenylate kinase (215 aa).

10–15 (GAGKGT) is an ATP binding site. Residues 30–59 (STGDMFRAAMKNNTELGKKAKSFMDNGDLV) form an NMP region. Residues T31, R36, 57–59 (DLV), 85–88 (GFPR), and Q92 each bind AMP. The segment at 126 to 163 (GRWICRTCGKTYHEIYNPPKVPGKCDLDGGELYQRDDD) is LID. R127 lines the ATP pocket. Zn(2+)-binding residues include C130 and C133. Residue 136 to 137 (TY) coordinates ATP. The Zn(2+) site is built by C150 and D153. Residues R160 and R171 each coordinate AMP. Residue Q199 participates in ATP binding.

This sequence belongs to the adenylate kinase family. Monomer.

It localises to the cytoplasm. The enzyme catalyses AMP + ATP = 2 ADP. Its pathway is purine metabolism; AMP biosynthesis via salvage pathway; AMP from ADP: step 1/1. Its function is as follows. Catalyzes the reversible transfer of the terminal phosphate group between ATP and AMP. Plays an important role in cellular energy homeostasis and in adenine nucleotide metabolism. This chain is Adenylate kinase, found in Listeria monocytogenes serotype 4b (strain CLIP80459).